Reading from the N-terminus, the 179-residue chain is Ribosome maturation factor RimM (179 aa).

Residues 102–173 (PEEYHYRDLI…ALHVQPPPGL (72 aa)) form the PRC barrel domain.

The protein belongs to the RimM family. Binds ribosomal protein uS19.

It is found in the cytoplasm. An accessory protein needed during the final step in the assembly of 30S ribosomal subunit, possibly for assembly of the head region. Essential for efficient processing of 16S rRNA. May be needed both before and after RbfA during the maturation of 16S rRNA. It has affinity for free ribosomal 30S subunits but not for 70S ribosomes. The sequence is that of Ribosome maturation factor RimM from Synechococcus sp. (strain JA-2-3B'a(2-13)) (Cyanobacteria bacterium Yellowstone B-Prime).